The following is a 446-amino-acid chain: Probable D-serine dehydratase (446 aa).

K116 is subject to N6-(pyridoxal phosphate)lysine.

Belongs to the serine/threonine dehydratase family. DsdA subfamily. The cofactor is pyridoxal 5'-phosphate.

The enzyme catalyses D-serine = pyruvate + NH4(+). This is Probable D-serine dehydratase from Bacillus cereus (strain 03BB102).